Consider the following 655-residue polypeptide: Very long-chain specific acyl-CoA dehydrogenase, mitochondrial (655 aa).

Residues 1–40 (MRAARMAQSTGRQLLRLRGVSSWPGELLGQPRPGPARRPY) constitute a mitochondrion transit peptide. The interval 22–66 (SWPGELLGQPRPGPARRPYASGVAQAAVDQSDSQPSEASTREKRA) is disordered. The interval 41-482 (ASGVAQAAVD…ALQGCMDKGK (442 aa)) is catalytic. The segment covering 49 to 59 (VDQSDSQPSEA) has biased composition (polar residues). Lysine 71 is modified (N6-acetyllysine; alternate). At lysine 71 the chain carries N6-succinyllysine; alternate. Position 195 is an N6-succinyllysine (lysine 195). FAD is bound at residue 214-223 (FCLTEPSSGS). Position 237 is an S-nitrosocysteine (cysteine 237). N6-acetyllysine; alternate is present on lysine 239. Lysine 239 is modified (N6-succinyllysine; alternate). 249 to 251 (WIS) contributes to the FAD binding site. N6-acetyllysine; alternate is present on residues lysine 276 and lysine 278. An N6-succinyllysine; alternate mark is found at lysine 276 and lysine 278. Lysine 298 is subject to N6-acetyllysine. Lysine 331 is modified (N6-acetyllysine; alternate). Lysine 331 bears the N6-succinyllysine; alternate mark. Lysine 372 is subject to N6-succinyllysine. A substrate-binding site is contributed by 461 to 463 (FEG). Glutamate 462 serves as the catalytic Proton acceptor. 464–466 (TND) contacts FAD. Lysine 482 carries the post-translational modification N6-acetyllysine; alternate. Residue lysine 482 is modified to N6-succinyllysine; alternate. The interval 483 to 516 (ELSGLGNALKNPFGNAGLLLGEAGKQLRRRAGLG) is membrane-anchoring. 2 positions are modified to phosphoserine: serine 517 and serine 522. Lysine 550 bears the N6-acetyllysine mark. Residue lysine 556 is modified to N6-acetyllysine; alternate. N6-succinyllysine; alternate is present on lysine 556. An FAD-binding site is contributed by glutamine 562. Lysine 639 carries the N6-succinyllysine modification.

The protein belongs to the acyl-CoA dehydrogenase family. As to quaternary structure, homodimer. Homodimerizes after import into the mitochondrion. The cofactor is FAD. Post-translationally, S-nitrosylation at Cys-237 in liver improves catalytic efficiency.

The protein resides in the mitochondrion inner membrane. It carries out the reaction a very-long-chain 2,3-saturated fatty acyl-CoA + oxidized [electron-transfer flavoprotein] + H(+) = a very-long-chain (2E)-enoyl-CoA + reduced [electron-transfer flavoprotein]. It catalyses the reaction dodecanoyl-CoA + oxidized [electron-transfer flavoprotein] + H(+) = (2E)-dodecenoyl-CoA + reduced [electron-transfer flavoprotein]. The catalysed reaction is tetradecanoyl-CoA + oxidized [electron-transfer flavoprotein] + H(+) = (2E)-tetradecenoyl-CoA + reduced [electron-transfer flavoprotein]. The enzyme catalyses oxidized [electron-transfer flavoprotein] + hexadecanoyl-CoA + H(+) = (2E)-hexadecenoyl-CoA + reduced [electron-transfer flavoprotein]. It carries out the reaction octadecanoyl-CoA + oxidized [electron-transfer flavoprotein] + H(+) = (2E)-octadecenoyl-CoA + reduced [electron-transfer flavoprotein]. It catalyses the reaction eicosanoyl-CoA + oxidized [electron-transfer flavoprotein] + H(+) = (2E)-eicosenoyl-CoA + reduced [electron-transfer flavoprotein]. The catalysed reaction is docosanoyl-CoA + oxidized [electron-transfer flavoprotein] + H(+) = (2E)-docosenoyl-CoA + reduced [electron-transfer flavoprotein]. The enzyme catalyses tetracosanoyl-CoA + oxidized [electron-transfer flavoprotein] + H(+) = (2E)-tetracosenoyl-CoA + reduced [electron-transfer flavoprotein]. It participates in lipid metabolism; mitochondrial fatty acid beta-oxidation. Its function is as follows. Very long-chain specific acyl-CoA dehydrogenase is one of the acyl-CoA dehydrogenases that catalyze the first step of mitochondrial fatty acid beta-oxidation, an aerobic process breaking down fatty acids into acetyl-CoA and allowing the production of energy from fats. The first step of fatty acid beta-oxidation consists in the removal of one hydrogen from C-2 and C-3 of the straight-chain fatty acyl-CoA thioester, resulting in the formation of trans-2-enoyl-CoA. Among the different mitochondrial acyl-CoA dehydrogenases, very long-chain specific acyl-CoA dehydrogenase acts specifically on acyl-CoAs with saturated 12 to 24 carbons long primary chains. The sequence is that of Very long-chain specific acyl-CoA dehydrogenase, mitochondrial from Bos taurus (Bovine).